A 353-amino-acid chain; its full sequence is Ferredoxin--NADP reductase 1 (353 aa).

Positions 43, 51, 56, 96, 135, 300, and 341 each coordinate FAD.

This sequence belongs to the ferredoxin--NADP reductase type 2 family. Homodimer. FAD is required as a cofactor.

It catalyses the reaction 2 reduced [2Fe-2S]-[ferredoxin] + NADP(+) + H(+) = 2 oxidized [2Fe-2S]-[ferredoxin] + NADPH. This chain is Ferredoxin--NADP reductase 1, found in Cupriavidus metallidurans (strain ATCC 43123 / DSM 2839 / NBRC 102507 / CH34) (Ralstonia metallidurans).